The chain runs to 314 residues: uncharacterized protein (314 aa).

The disordered stretch occupies residues Met-1–Thr-71. S-adenosyl-L-methionine contacts are provided by Gly-266, Ile-286, and Leu-295.

Belongs to the class IV-like SAM-binding methyltransferase superfamily. RNA methyltransferase TrmH family.

This is an uncharacterized protein from Mycolicibacterium smegmatis (strain ATCC 700084 / mc(2)155) (Mycobacterium smegmatis).